The following is a 127-amino-acid chain: Large ribosomal subunit protein bL17 (127 aa).

The protein belongs to the bacterial ribosomal protein bL17 family. Part of the 50S ribosomal subunit. Contacts protein L32.

This Salmonella paratyphi A (strain AKU_12601) protein is Large ribosomal subunit protein bL17.